The chain runs to 174 residues: uncharacterized protein (174 aa).

The helical transmembrane segment at 7–27 threads the bilayer; that stretch reads LIILAIFTLWVGGFGYYLYLI.

It is found in the membrane. This is an uncharacterized protein from Rickettsia prowazekii (strain Madrid E).